A 555-amino-acid polypeptide reads, in one-letter code: 2-succinyl-5-enolpyruvyl-6-hydroxy-3-cyclohexene-1-carboxylate synthase (555 aa).

Belongs to the TPP enzyme family. MenD subfamily. As to quaternary structure, homodimer. Mg(2+) serves as cofactor. It depends on Mn(2+) as a cofactor. Thiamine diphosphate is required as a cofactor.

The catalysed reaction is isochorismate + 2-oxoglutarate + H(+) = 5-enolpyruvoyl-6-hydroxy-2-succinyl-cyclohex-3-ene-1-carboxylate + CO2. It functions in the pathway quinol/quinone metabolism; 1,4-dihydroxy-2-naphthoate biosynthesis; 1,4-dihydroxy-2-naphthoate from chorismate: step 2/7. Its pathway is quinol/quinone metabolism; menaquinone biosynthesis. In terms of biological role, catalyzes the thiamine diphosphate-dependent decarboxylation of 2-oxoglutarate and the subsequent addition of the resulting succinic semialdehyde-thiamine pyrophosphate anion to isochorismate to yield 2-succinyl-5-enolpyruvyl-6-hydroxy-3-cyclohexene-1-carboxylate (SEPHCHC). The polypeptide is 2-succinyl-5-enolpyruvyl-6-hydroxy-3-cyclohexene-1-carboxylate synthase (Bacteroides fragilis (strain ATCC 25285 / DSM 2151 / CCUG 4856 / JCM 11019 / LMG 10263 / NCTC 9343 / Onslow / VPI 2553 / EN-2)).